The sequence spans 359 residues: Guanine nucleotide-binding protein alpha-4 subunit (359 aa).

Residue glycine 2 is the site of N-myristoyl glycine attachment. A lipid anchor (S-palmitoyl cysteine) is attached at cysteine 3. The 329-residue stretch at 31 to 359 (TEVKLLLLGA…RYNLKDCGLF (329 aa)) folds into the G-alpha domain. Residues 34–47 (KLLLLGAGESGKST) form a G1 motif region. Residues 39 to 46 (GAGESGKS), 178 to 184 (LRARVKS), 203 to 207 (DVGGQ), 272 to 275 (NKMD), and alanine 331 each bind GTP. A Mg(2+)-binding site is contributed by serine 46. Residues 176-184 (DILRARVKS) are G2 motif. Residues 199-208 (FRMFDVGGQR) are G3 motif. The interval 268–275 (ILFLNKMD) is G4 motif. A G5 motif region spans residues 329–334 (TCATDT).

This sequence belongs to the G-alpha family. G(i/o/t/z) subfamily. As to quaternary structure, g proteins are composed of 3 units; alpha, beta and gamma. The alpha chain contains the guanine nucleotide binding site.

Functionally, guanine nucleotide-binding proteins (G proteins) are involved as modulators or transducers in various transmembrane signaling systems. In Caenorhabditis briggsae, this protein is Guanine nucleotide-binding protein alpha-4 subunit (gpa-4).